A 355-amino-acid chain; its full sequence is Putative [LysW]-L-2-aminoadipate/[LysW]-L-glutamate phosphate reductase (355 aa).

13–16 (SGMT) contacts NADP(+). The active site involves Cys153. Asn323 serves as a coordination point for NADP(+).

This sequence belongs to the NAGSA dehydrogenase family. Type 1 subfamily. LysY sub-subfamily.

The protein resides in the cytoplasm. It carries out the reaction [amino-group carrier protein]-C-terminal-N-(1-carboxy-5-oxopentan-1-yl)-L-glutamine + phosphate + NADP(+) = [amino-group carrier protein]-C-terminal-N-(1-carboxy-5-phosphooxy-5-oxopentan-1-yl)-L-glutamine + NADPH + H(+). The catalysed reaction is [amino-group carrier protein]-C-terminal-gamma-(L-glutamyl-5-semialdehyde)-L-glutamate + phosphate + NADP(+) = [amino-group carrier protein]-C-terminal-gamma-(5-phospho-L-glutamyl)-L-glutamate + NADPH + H(+). The protein operates within amino-acid biosynthesis; L-lysine biosynthesis via AAA pathway; L-lysine from L-alpha-aminoadipate (Thermus route): step 3/5. It participates in amino-acid biosynthesis; L-arginine biosynthesis. In terms of biological role, involved in both the arginine and lysine biosynthetic pathways. This is Putative [LysW]-L-2-aminoadipate/[LysW]-L-glutamate phosphate reductase from Aeropyrum pernix (strain ATCC 700893 / DSM 11879 / JCM 9820 / NBRC 100138 / K1).